The chain runs to 277 residues: Formamidopyrimidine-DNA glycosylase (277 aa).

Pro2 functions as the Schiff-base intermediate with DNA in the catalytic mechanism. The active-site Proton donor is the Glu3. Catalysis depends on Lys60, which acts as the Proton donor; for beta-elimination activity. The DNA site is built by His94, Arg113, and Arg158. Residues 243 to 277 (WVYNRAGEPCKVCGDVIQRIKLGGRSSHFCRQCQV) form an FPG-type zinc finger. The active-site Proton donor; for delta-elimination activity is Arg267.

It belongs to the FPG family. As to quaternary structure, monomer. It depends on Zn(2+) as a cofactor.

It catalyses the reaction Hydrolysis of DNA containing ring-opened 7-methylguanine residues, releasing 2,6-diamino-4-hydroxy-5-(N-methyl)formamidopyrimidine.. The catalysed reaction is 2'-deoxyribonucleotide-(2'-deoxyribose 5'-phosphate)-2'-deoxyribonucleotide-DNA = a 3'-end 2'-deoxyribonucleotide-(2,3-dehydro-2,3-deoxyribose 5'-phosphate)-DNA + a 5'-end 5'-phospho-2'-deoxyribonucleoside-DNA + H(+). Its function is as follows. Involved in base excision repair of DNA damaged by oxidation or by mutagenic agents. Acts as a DNA glycosylase that recognizes and removes damaged bases. Has a preference for oxidized purines, such as 7,8-dihydro-8-oxoguanine (8-oxoG). Has AP (apurinic/apyrimidinic) lyase activity and introduces nicks in the DNA strand. Cleaves the DNA backbone by beta-delta elimination to generate a single-strand break at the site of the removed base with both 3'- and 5'-phosphates. The sequence is that of Formamidopyrimidine-DNA glycosylase from Trichormus variabilis (strain ATCC 29413 / PCC 7937) (Anabaena variabilis).